The primary structure comprises 502 residues: Glycerate kinase (502 aa).

Belongs to the glycerate kinase type-2 family.

The protein localises to the cytoplasm. The catalysed reaction is (R)-glycerate + ATP = (2R)-3-phosphoglycerate + ADP + H(+). In Danio rerio (Zebrafish), this protein is Glycerate kinase (glyctk).